We begin with the raw amino-acid sequence, 630 residues long: Biosynthetic arginine decarboxylase (630 aa).

Lys-99 bears the N6-(pyridoxal phosphate)lysine mark. Val-281–Tyr-291 contributes to the substrate binding site.

It belongs to the Orn/Lys/Arg decarboxylase class-II family. SpeA subfamily. It depends on Mg(2+) as a cofactor. Requires pyridoxal 5'-phosphate as cofactor.

The enzyme catalyses L-arginine + H(+) = agmatine + CO2. It functions in the pathway amine and polyamine biosynthesis; agmatine biosynthesis; agmatine from L-arginine: step 1/1. Its function is as follows. Catalyzes the biosynthesis of agmatine from arginine. The chain is Biosynthetic arginine decarboxylase from Bacteroides fragilis (strain ATCC 25285 / DSM 2151 / CCUG 4856 / JCM 11019 / LMG 10263 / NCTC 9343 / Onslow / VPI 2553 / EN-2).